Consider the following 168-residue polypeptide: Zinc-finger homeodomain protein 14 (168 aa).

The ZF-HD dimerization-type; degenerate zinc finger occupies 7-51; that stretch reads YRECMRNHAAKLGSYAIDGCREYSQPSTGDLCVACGCHRSYHRRI. A coiled-coil region spans residues 76-103; the sequence is ARLKWKTAEERNEEEEDDTEETSTEEKM. Positions 82–112 are disordered; the sequence is TAEERNEEEEDDTEETSTEEKMTVQRRRKSK. Residues 86–98 are compositionally biased toward acidic residues; sequence RNEEEEDDTEETS. Positions 106–168 form a DNA-binding region, homeobox; that stretch reads QRRRKSKFTA…WVNNNKKFYH (63 aa).

In terms of assembly, homo- and heterodimer with other ZFHD proteins. Interacts with ZHD11. Mostly expressed in flowers and stems.

The protein localises to the nucleus. Its function is as follows. Putative transcription factor. The chain is Zinc-finger homeodomain protein 14 (ZHD14) from Arabidopsis thaliana (Mouse-ear cress).